Reading from the N-terminus, the 105-residue chain is Large ribosomal subunit protein uL23 (105 aa).

This sequence belongs to the universal ribosomal protein uL23 family. Part of the 50S ribosomal subunit. Contacts protein L29, and trigger factor when it is bound to the ribosome.

One of the early assembly proteins it binds 23S rRNA. One of the proteins that surrounds the polypeptide exit tunnel on the outside of the ribosome. Forms the main docking site for trigger factor binding to the ribosome. The protein is Large ribosomal subunit protein uL23 of Chloroherpeton thalassium (strain ATCC 35110 / GB-78).